The sequence spans 226 residues: 3-dehydroquinate dehydratase (226 aa).

Residues Ser9, 32-34 (EVR), and Arg59 contribute to the 3-dehydroquinate site. Residue His119 is the Proton donor/acceptor of the active site. The Schiff-base intermediate with substrate role is filled by Lys146. 3 residues coordinate 3-dehydroquinate: Arg187, Thr208, and Gln212.

The protein belongs to the type-I 3-dehydroquinase family. Homodimer.

It carries out the reaction 3-dehydroquinate = 3-dehydroshikimate + H2O. Its pathway is metabolic intermediate biosynthesis; chorismate biosynthesis; chorismate from D-erythrose 4-phosphate and phosphoenolpyruvate: step 3/7. Functionally, involved in the third step of the chorismate pathway, which leads to the biosynthesis of aromatic amino acids. Catalyzes the cis-dehydration of 3-dehydroquinate (DHQ) and introduces the first double bond of the aromatic ring to yield 3-dehydroshikimate. The chain is 3-dehydroquinate dehydratase from Desulfotalea psychrophila (strain LSv54 / DSM 12343).